We begin with the raw amino-acid sequence, 243 residues long: Venom nerve growth factor 2 (243 aa).

Positions 1–18 are cleaved as a signal peptide; it reads MSMLCYTLIIAFLIGIWA. A propeptide spanning residues 19–125 is cleaved from the precursor; the sequence is APKSEDNVPL…TLNRNIRAKR (107 aa). Positions 47 to 66 are enriched in basic and acidic residues; the sequence is GLKTSRNTDQRHPAPKKAED. Residues 47–67 form a disordered region; the sequence is GLKTSRNTDQRHPAPKKAEDQ. Cystine bridges form between Cys139–Cys204 and Cys192–Cys234. Asn148 carries an N-linked (GlcNAc...) asparagine glycan.

Belongs to the NGF-beta family. In terms of assembly, homodimer; non-covalently linked. Expressed by the venom gland.

It localises to the secreted. Its function is as follows. Nerve growth factor is important for the development and maintenance of the sympathetic and sensory nervous systems. It stimulates division and differentiation of sympathetic and embryonic sensory neurons as well as basal forebrain cholinergic neurons in the brain. Its relevance in the snake venom is not clear. However, it has been shown to inhibit metalloproteinase-dependent proteolysis of platelet glycoprotein Ib alpha, suggesting a metalloproteinase inhibition to prevent metalloprotease autodigestion and/or protection against prey proteases. Binds a lipid between the two protein chains in the homodimer. The lipid-bound form promotes histamine relase from mouse mast cells, contrary to the lipid-free form. This chain is Venom nerve growth factor 2, found in Pseudonaja textilis (Eastern brown snake).